The sequence spans 288 residues: MTLLLKNTLYLALIISVISSFPTSLFAQNCGCAPNLCCSNFGFCGTGTPYCGVGNCQSGPCEGGTPTTPTTPTTPTTPGTGGGGSSVSDIVSQAFFDGIIGQAAASCPGKNFYTRAAFLSAVDPKFGNEGSSDDNKREIAAFFAHISHETTNLCHIEERDGDVGDAYCDQDKAAQYPCAAGKKYYGRGPLQLSWNYNYALAGQAIGFDGLGNPEKVATDVNTSFKAAMWFWMTNVHSVMNQGFGATTKAINGALECNGQNQDQANDRIQFYKKYCADFGVAPGDNLTC.

An N-terminal signal peptide occupies residues 1 to 27 (MTLLLKNTLYLALIISVISSFPTSLFA). Gln-28 is modified (pyrrolidone carboxylic acid). Residues 28–63 (QNCGCAPNLCCSNFGFCGTGTPYCGVGNCQSGPCEG) form the Chitin-binding type-1 domain. Disulfide bonds link Cys-30-Cys-38, Cys-32-Cys-44, Cys-37-Cys-51, and Cys-56-Cys-61. The span at 64-78 (GTPTTPTTPTTPTTP) shows a compositional bias: low complexity. Residues 64 to 84 (GTPTTPTTPTTPTTPGTGGGG) form a disordered region. The segment at 64 to 85 (GTPTTPTTPTTPTTPGTGGGGS) is hinge region (Gly/Pro/Thr-rich). 4 positions are modified to 4-hydroxyproline: Pro-66, Pro-69, Pro-72, and Pro-75. A run of 4 repeats spans residues 67–69 (TTP), 70–72 (TTP), 73–75 (TTP), and 76–78 (TTP). The tract at residues 67 to 78 (TTPTTPTTPTTP) is 4 X 3 AA tandem repeats of T-T-P. Residues 86–288 (SVSDIVSQAF…GVAPGDNLTC (203 aa)) are catalytic. Cystine bridges form between Cys-107-Cys-154, Cys-168-Cys-178, and Cys-256-Cys-288. Catalysis depends on Glu-149, which acts as the Proton donor.

It belongs to the glycosyl hydrolase 19 family. Chitinase class I subfamily. In terms of processing, O-glycosylated on hydroxyprolines; contains xylose. Localized to infected area.

The protein resides in the secreted. It localises to the extracellular space. It carries out the reaction Random endo-hydrolysis of N-acetyl-beta-D-glucosaminide (1-&gt;4)-beta-linkages in chitin and chitodextrins.. Its function is as follows. Defense against chitin-containing fungal pathogens. In Beta vulgaris (Sugar beet), this protein is Acidic endochitinase SP2 (SP2).